The sequence spans 108 residues: Trp operon repressor homolog (108 aa).

A DNA-binding region spans residues Gln59–Ser82.

It belongs to the TrpR family. In terms of assembly, homodimer.

It is found in the cytoplasm. Functionally, this protein is an aporepressor. When complexed with L-tryptophan it binds the operator region of the trp operon and prevents the initiation of transcription. This Aliivibrio fischeri (strain MJ11) (Vibrio fischeri) protein is Trp operon repressor homolog.